Consider the following 466-residue polypeptide: Soluble pyridine nucleotide transhydrogenase (466 aa).

Residue 36–45 (EKESSVGGGC) participates in FAD binding.

The protein belongs to the class-I pyridine nucleotide-disulfide oxidoreductase family. FAD serves as cofactor.

Its subcellular location is the cytoplasm. The catalysed reaction is NAD(+) + NADPH = NADH + NADP(+). Functionally, conversion of NADPH, generated by peripheral catabolic pathways, to NADH, which can enter the respiratory chain for energy generation. The sequence is that of Soluble pyridine nucleotide transhydrogenase from Vibrio atlanticus (strain LGP32) (Vibrio splendidus (strain Mel32)).